Consider the following 90-residue polypeptide: MPKRKAKGDAKGDKGKVKDEPQRRSARLSAKPALPKPEPRPKKAPAKKGEKLAKGRKGKAEVSKDGNNPAKNRDASTVQSQKAEGTGDAK.

The interval 1–90 is disordered; the sequence is MPKRKAKGDA…QKAEGTGDAK (90 aa). A compositionally biased stretch (basic and acidic residues) spans 7 to 23; sequence KGDAKGDKGKVKDEPQR. Ser29 carries the post-translational modification ADP-ribosylserine. Over residues 37–64 the composition is skewed to basic and acidic residues; sequence PEPRPKKAPAKKGEKLAKGRKGKAEVSK. Residues 65–83 are compositionally biased toward polar residues; sequence DGNNPAKNRDASTVQSQKA. Position 80 is a phosphoserine (Ser80). An N6-acetyllysine modification is found at Lys82.

It belongs to the HMGN family.

The protein resides in the nucleus. The chain is High mobility group nucleosome-binding domain-containing protein 4 (HMGN4) from Bos taurus (Bovine).